We begin with the raw amino-acid sequence, 218 residues long: MNQDQMKKAAAEAAIEYVESGMIVGVGTGSTANHFIDLLAAIKDRIDGTVASSEASAQRLRGHGIQVMDLNTAGQLPLYVDGADESNAELHLIKGGGGALTREKIVAAASDKFVCIADESKLVDVLGAFPLPVEVIPMARAYVARELTKLGGQPVLREGFTTDNGNVILDVHNLQISDPVAMEDHINQLPGVVTVGIFAQRPADVLILGSAGGIRKIG.

Substrate-binding positions include 28 to 31 (TGST), 81 to 84 (DGAD), and 94 to 97 (KGGG). The active-site Proton acceptor is E103. K121 contributes to the substrate binding site.

Belongs to the ribose 5-phosphate isomerase family. Homodimer.

It carries out the reaction aldehydo-D-ribose 5-phosphate = D-ribulose 5-phosphate. Its pathway is carbohydrate degradation; pentose phosphate pathway; D-ribose 5-phosphate from D-ribulose 5-phosphate (non-oxidative stage): step 1/1. Functionally, catalyzes the reversible conversion of ribose-5-phosphate to ribulose 5-phosphate. The chain is Ribose-5-phosphate isomerase A from Thioalkalivibrio sulfidiphilus (strain HL-EbGR7).